We begin with the raw amino-acid sequence, 330 residues long: Putative [LysW]-L-2-aminoadipate/[LysW]-L-glutamate phosphate reductase (330 aa).

10–13 lines the NADP(+) pocket; it reads SGYI. The active site involves Cys-142. Asn-297 is a binding site for NADP(+).

The protein belongs to the NAGSA dehydrogenase family. Type 1 subfamily. LysY sub-subfamily.

It is found in the cytoplasm. The enzyme catalyses [amino-group carrier protein]-C-terminal-N-(1-carboxy-5-oxopentan-1-yl)-L-glutamine + phosphate + NADP(+) = [amino-group carrier protein]-C-terminal-N-(1-carboxy-5-phosphooxy-5-oxopentan-1-yl)-L-glutamine + NADPH + H(+). It catalyses the reaction [amino-group carrier protein]-C-terminal-gamma-(L-glutamyl-5-semialdehyde)-L-glutamate + phosphate + NADP(+) = [amino-group carrier protein]-C-terminal-gamma-(5-phospho-L-glutamyl)-L-glutamate + NADPH + H(+). It participates in amino-acid biosynthesis; L-lysine biosynthesis via AAA pathway; L-lysine from L-alpha-aminoadipate (Thermus route): step 3/5. Its pathway is amino-acid biosynthesis; L-arginine biosynthesis. Its function is as follows. Involved in both the arginine and lysine biosynthetic pathways. This Pyrococcus furiosus (strain ATCC 43587 / DSM 3638 / JCM 8422 / Vc1) protein is Putative [LysW]-L-2-aminoadipate/[LysW]-L-glutamate phosphate reductase.